Consider the following 931-residue polypeptide: Probable ubiquitin-like-specific protease 2B (931 aa).

A disordered region spans residues 204 to 224 (SLSDRSALSEASDSEDDEEDW). Over residues 215–224 (SDSEDDEEDW) the composition is skewed to acidic residues. Active-site residues include histidine 489, aspartate 522, and cysteine 577. The interval 825-931 (HEEEIDESPP…PTGEAEEMEK (107 aa)) is disordered. Residues 839-851 (SLKSATVGSNTAD) show a composition bias toward polar residues. Positions 873-904 (NDRDEEKPLEHDLEIGDKTSEDVGDDCDQKEP) are enriched in basic and acidic residues.

This sequence belongs to the peptidase C48 family.

Functionally, protease that catalyzes two essential functions in the SUMO pathway: processing of full-length SUMOs to their mature forms and deconjugation of SUMO from targeted proteins. In Arabidopsis thaliana (Mouse-ear cress), this protein is Probable ubiquitin-like-specific protease 2B (ULP2B).